The chain runs to 607 residues: Elongation factor 4 (607 aa).

The region spanning 11 to 193 (SKIRNFSIIA…QIVEKVPAPT (183 aa)) is the tr-type G domain. GTP is bound by residues 23 to 28 (DHGKST) and 140 to 143 (NKID).

The protein belongs to the TRAFAC class translation factor GTPase superfamily. Classic translation factor GTPase family. LepA subfamily.

The protein resides in the cell membrane. The catalysed reaction is GTP + H2O = GDP + phosphate + H(+). Its function is as follows. Required for accurate and efficient protein synthesis under certain stress conditions. May act as a fidelity factor of the translation reaction, by catalyzing a one-codon backward translocation of tRNAs on improperly translocated ribosomes. Back-translocation proceeds from a post-translocation (POST) complex to a pre-translocation (PRE) complex, thus giving elongation factor G a second chance to translocate the tRNAs correctly. Binds to ribosomes in a GTP-dependent manner. This Bacillus cereus (strain ATCC 10987 / NRS 248) protein is Elongation factor 4.